A 275-amino-acid polypeptide reads, in one-letter code: Nurim (275 aa).

Residues 1-4 lie on the Nuclear side of the membrane; the sequence is MASV. The helical transmembrane segment at 5-32 threads the bilayer; sequence TFRDGFLCVSALITFVFVFVTGADFVRF. Residues 33 to 63 are Perinuclear space-facing; that stretch reads VSFRAINHNLSGAAPLCRDSVPWSVALRDGV. Residues 64–85 form a helical membrane-spanning segment; sequence VQKAVAVDVLLLVVFSLQHSLL. Residues 86-102 are Nuclear-facing; the sequence is AWTPVKRVCQSVFGVLS. A helical membrane pass occupies residues 103–119; sequence RSVYCFTTAAALQILMH. Residues 120–138 lie on the Perinuclear space side of the membrane; sequence YWRPVTSAPCLWSVSSAPW. The chain crosses the membrane as a helical span at residues 139 to 169; sequence EIWFPLICFIVHFLCWAIICSILLIFDYPEL. Residues 170–196 are Nuclear-facing; it reads LGIKQVYYECLGLGDPLLLKSERAQRL. The helical transmembrane segment at 197 to 215 threads the bilayer; sequence YSHLRHPVCVELLTVLWLL. The Perinuclear space segment spans residues 216-221; the sequence is PSFPLD. The chain crosses the membrane as a helical span at residues 222–239; that stretch reads RLLLAVFLTVYLILAHSL. Residues 240–275 are Nuclear-facing; that stretch reads DKQDCAYLRHQLRNKLQLFSTPLEGSEQTNDNNKLE.

It belongs to the nurim family.

Its subcellular location is the nucleus inner membrane. The polypeptide is Nurim (nrm) (Danio rerio (Zebrafish)).